A 488-amino-acid chain; its full sequence is ATP synthase subunit beta (488 aa).

164-171 is a binding site for ATP; that stretch reads GGAGVGKT.

This sequence belongs to the ATPase alpha/beta chains family. As to quaternary structure, F-type ATPases have 2 components, CF(1) - the catalytic core - and CF(0) - the membrane proton channel. CF(1) has five subunits: alpha(3), beta(3), gamma(1), delta(1), epsilon(1). CF(0) has four main subunits: a(1), b(1), b'(1) and c(9-12).

It localises to the cellular thylakoid membrane. The enzyme catalyses ATP + H2O + 4 H(+)(in) = ADP + phosphate + 5 H(+)(out). Produces ATP from ADP in the presence of a proton gradient across the membrane. The catalytic sites are hosted primarily by the beta subunits. This is ATP synthase subunit beta from Prochlorococcus marinus (strain NATL2A).